The following is a 249-amino-acid chain: Large ribosomal subunit protein uL1 (249 aa).

This sequence belongs to the universal ribosomal protein uL1 family. Part of the 50S ribosomal subunit.

Its function is as follows. Binds directly to 23S rRNA. The L1 stalk is quite mobile in the ribosome, and is involved in E site tRNA release. Functionally, protein L1 is also a translational repressor protein, it controls the translation of the L11 operon by binding to its mRNA. The sequence is that of Large ribosomal subunit protein uL1 from Orientia tsutsugamushi (strain Ikeda) (Rickettsia tsutsugamushi).